An 875-amino-acid chain; its full sequence is Lysine-specific demethylase 7A (875 aa).

A PHD-type zinc finger spans residues 5–56 (PLYCVCRQPYDVNRFMIECDICKDWFHGSCVQVVEHHAADIDVYHCPNCEPI). Residues 197–353 (FSDTRMSNLV…MQLRCYEMER (157 aa)) form the JmjC domain. Position 246 (Thr246) interacts with substrate. Positions 249 and 251 each coordinate Fe cation. A substrate-binding site is contributed by Lys266. Residue His321 participates in Fe cation binding. Disordered stretches follow at residues 442–506 (EDDS…SRKL), 629–710 (SQGE…NTDC), and 742–820 (QGNG…ATAK). Polar residues predominate over residues 448 to 462 (AVKTQGSAECSLSRS). Residues 478 to 505 (QDHHHHRRRHHHHHHHHHHHHHHHHSRK) show a composition bias toward basic residues. Residues 650-663 (SDSKAGDSAEKCSL) show a composition bias toward basic and acidic residues. Residues 688-697 (SHRHSHHKQA) show a composition bias toward basic residues. The segment covering 742 to 762 (QGNGSSTSSSSDMWDSSEPCS) has biased composition (low complexity).

The protein belongs to the JHDM1 histone demethylase family. JHDM1D subfamily. Fe(2+) is required as a cofactor. As to expression, predominantly expressed in brain.

Its subcellular location is the nucleus. Histone demethylase required for brain development. Specifically demethylates dimethylated 'Lys-9' and 'Lys-27' (H3K9me2 and H3K27me2, respectively) of histone H3 and monomethylated histone H4 'Lys-20' residue (H4K20Me1), thereby playing a central role in histone code. The protein is Lysine-specific demethylase 7A (kdm7a) of Danio rerio (Zebrafish).